We begin with the raw amino-acid sequence, 522 residues long: Occludin (522 aa).

The interval Met-1–Asn-20 is disordered. Residues Met-1–Arg-66 lie on the Cytoplasmic side of the membrane. Residues Ser-60 to Arg-269 enclose the MARVEL domain. The helical transmembrane segment at Ile-67 to Trp-89 threads the bilayer. At Asp-90–Arg-135 the chain is on the extracellular side. A helical transmembrane segment spans residues Ala-136 to Val-160. The Cytoplasmic portion of the chain corresponds to Ile-161–Arg-170. Residues Tyr-171–Met-195 traverse the membrane as a helical segment. The Extracellular portion of the chain corresponds to Gly-196 to Glu-243. Cys-216 and Cys-237 are disulfide-bonded. Residues Ala-244–Val-265 traverse the membrane as a helical segment. Topologically, residues Lys-266–Thr-522 are cytoplasmic. Ser-302 bears the Phosphoserine mark. Position 305 is a phosphothreonine (Thr-305). Phosphoserine is present on residues Ser-313, Ser-321, and Ser-340. The segment at Val-360–Glu-407 is disordered. Over residues Arg-367–Thr-376 the composition is skewed to polar residues. Tyr-368 carries the phosphotyrosine modification. A phosphoserine mark is found at Ser-369 and Ser-370. Residues Ala-381 to Ser-390 are compositionally biased toward basic residues. Positions Lys-391–Thr-400 are enriched in basic and acidic residues. Residues Tyr-398 and Tyr-402 each carry the phosphotyrosine modification. Phosphothreonine; by PKC/PRKCH occurs at positions 403 and 404. Ser-408 carries the post-translational modification Phosphoserine. Residues Glu-414–Thr-522 enclose the OCEL domain. A coiled-coil region spans residues Asp-426 to Gly-489. Ser-490 is modified (phosphoserine).

The protein belongs to the ELL/occludin family. In terms of assembly, interacts with TJP1/ZO1. Interacts with VAPA. Interacts with CLDN1, CLDN6, CLDN9, CLDN11, CLDN12 and CLDN17. Interacts with PLSCR1. Interacts with LSR, ILDR1 and ILDR2. Interacts with TJP2/ZO2. In terms of processing, dephosphorylated by PTPRJ. The tyrosine phosphorylation on Tyr-398 and Tyr-402 reduces its ability to interact with TJP1. Phosphorylation at Ser-490 also attenuates the interaction with TJP1. Post-translationally, (Microbial infection) Cleaved by S.pyogenes SpeB protease; leading to its degradation. Degradation by SpeB promotes bacterial translocation across the host epithelial barrier. As to expression, localized at tight junctions of both epithelial and endothelial cells. Highly expressed in kidney. Not detected in testis.

It localises to the cell membrane. The protein localises to the cell junction. Its subcellular location is the tight junction. Its function is as follows. May play a role in the formation and regulation of the tight junction (TJ) paracellular permeability barrier. It is able to induce adhesion when expressed in cells lacking tight junctions. Functionally, (Microbial infection) Acts as a coreceptor for hepatitis C virus (HCV) in hepatocytes. This is Occludin (OCLN) from Homo sapiens (Human).